Here is a 450-residue protein sequence, read N- to C-terminus: Probable ATP-dependent RNA helicase MG425 homolog (450 aa).

Positions 3-31 match the Q motif motif; sequence STFNELGVSPALIATLKDNNINQPTTIQQ. The Helicase ATP-binding domain maps to 34–206; sequence IPQFLQHQNL…KQITKNGIFL (173 aa). 47-54 lines the ATP pocket; the sequence is SPTGTGKT. A DEVD box motif is present at residues 154 to 157; sequence DEVD. The Helicase C-terminal domain occupies 234 to 384; sequence RKKQALYSLV…PLRPMRLRLI (151 aa). Residues 429-450 form a disordered region; it reads MRQPERDMQKNKLHDSDWQSNM. Over residues 430–450 the composition is skewed to basic and acidic residues; sequence RQPERDMQKNKLHDSDWQSNM.

This sequence belongs to the DEAD box helicase family.

It carries out the reaction ATP + H2O = ADP + phosphate + H(+). The sequence is that of Probable ATP-dependent RNA helicase MG425 homolog from Mycoplasma pneumoniae (strain ATCC 29342 / M129 / Subtype 1) (Mycoplasmoides pneumoniae).